The sequence spans 613 residues: tRNA (uracil-5-)-methyltransferase homolog A (613 aa).

Residues 1 to 46 (MSEPAAEVPEPMEDCGQDASAVPSSAAPLCQKEEAGPGPAAGPGTQ) are disordered. Residues 63–136 (FKLELQNVPR…CPLSVRLARP (74 aa)) form the RRM domain. Residues 170–200 (YTEQLEQKRLECERVLQKLAKEIGNTNRALL) adopt a coiled-coil conformation. Ser-368 bears the Phosphoserine mark. Residues Gln-401, Glu-451, and Asp-500 each contribute to the S-adenosyl-L-methionine site. The active-site Nucleophile is Cys-528. Catalysis depends on Glu-571, which acts as the Proton acceptor.

Belongs to the class I-like SAM-binding methyltransferase superfamily. RNA M5U methyltransferase family. Widely expressed at low level. Expressed at higher level in proliferating cells.

The protein resides in the cytoplasm. The protein localises to the cytosol. The enzyme catalyses uridine(54) in tRNA + S-adenosyl-L-methionine = 5-methyluridine(54) in tRNA + S-adenosyl-L-homocysteine + H(+). It carries out the reaction a uridine in mRNA + S-adenosyl-L-methionine = a 5-methyluridine in mRNA + S-adenosyl-L-homocysteine + H(+). S-adenosyl-L-methionine-dependent methyltransferase that catalyzes the formation of 5-methyl-uridine in tRNAs and some mRNAs. Mainly catalyzes the methylation of uridine at position 54 (m5U54) in cytosolic tRNAs. Also able to mediate the formation of 5-methyl-uridine in some mRNAs. This chain is tRNA (uracil-5-)-methyltransferase homolog A, found in Mus musculus (Mouse).